The sequence spans 526 residues: Peptide chain release factor 3 (526 aa).

In terms of domain architecture, tr-type G spans Asp9 to Gln277. Residues Ser18–Thr25, Asp86–His90, and Asn140–Asp143 each bind GTP.

Belongs to the TRAFAC class translation factor GTPase superfamily. Classic translation factor GTPase family. PrfC subfamily.

The protein resides in the cytoplasm. Increases the formation of ribosomal termination complexes and stimulates activities of RF-1 and RF-2. It binds guanine nucleotides and has strong preference for UGA stop codons. It may interact directly with the ribosome. The stimulation of RF-1 and RF-2 is significantly reduced by GTP and GDP, but not by GMP. The chain is Peptide chain release factor 3 from Shewanella halifaxensis (strain HAW-EB4).